The following is a 116-amino-acid chain: Iron-sulfur cluster insertion protein ErpA (116 aa).

Iron-sulfur cluster contacts are provided by cysteine 44, cysteine 108, and cysteine 110.

The protein belongs to the HesB/IscA family. As to quaternary structure, homodimer. Iron-sulfur cluster is required as a cofactor.

Its function is as follows. Required for insertion of 4Fe-4S clusters for at least IspG. This Pseudomonas putida (strain ATCC 47054 / DSM 6125 / CFBP 8728 / NCIMB 11950 / KT2440) protein is Iron-sulfur cluster insertion protein ErpA.